Here is a 749-residue protein sequence, read N- to C-terminus: Poly(U)-binding-splicing factor rnp-6 (749 aa).

RRM domains lie at 102–176 (SRIY…LKVN) and 207–285 (FRVY…KCVT). Disordered stretches follow at residues 323–388 (AGSS…PDVV) and 457–480 (IEEEEEARTERVKLSTSQRKKMKR). The segment covering 330 to 354 (PSESGGSRAASPAPRAQSPATPSSS) has biased composition (low complexity). Positions 658–739 (NVIVLRNMVT…NTVKAEAYDQ (82 aa)) constitute an RRM 3; atypical domain.

It belongs to the RRM half pint family.

It localises to the nucleus. Its function is as follows. DNA- and RNA-binding protein, involved in several nuclear processes such as pre-mRNA splicing, apoptosis and transcription regulation. Ensures the correct splicing of genes involved in immunity to promote longevity in response to infection by pathogenic bacteria such as S.aureus. The polypeptide is Poly(U)-binding-splicing factor rnp-6 (Caenorhabditis elegans).